The chain runs to 226 residues: Enolase-phosphatase E1 (226 aa).

It belongs to the HAD-like hydrolase superfamily. MasA/MtnC family. In terms of assembly, monomer. The cofactor is Mg(2+).

It carries out the reaction 5-methylsulfanyl-2,3-dioxopentyl phosphate + H2O = 1,2-dihydroxy-5-(methylsulfanyl)pent-1-en-3-one + phosphate. Its pathway is amino-acid biosynthesis; L-methionine biosynthesis via salvage pathway; L-methionine from S-methyl-5-thio-alpha-D-ribose 1-phosphate: step 3/6. It functions in the pathway amino-acid biosynthesis; L-methionine biosynthesis via salvage pathway; L-methionine from S-methyl-5-thio-alpha-D-ribose 1-phosphate: step 4/6. Bifunctional enzyme that catalyzes the enolization of 2,3-diketo-5-methylthiopentyl-1-phosphate (DK-MTP-1-P) into the intermediate 2-hydroxy-3-keto-5-methylthiopentenyl-1-phosphate (HK-MTPenyl-1-P), which is then dephosphorylated to form the acireductone 1,2-dihydroxy-3-keto-5-methylthiopentene (DHK-MTPene). In Alcanivorax borkumensis (strain ATCC 700651 / DSM 11573 / NCIMB 13689 / SK2), this protein is Enolase-phosphatase E1.